The sequence spans 340 residues: Phospho-N-acetylmuramoyl-pentapeptide-transferase (340 aa).

Transmembrane regions (helical) follow at residues valine 24–leucine 44, threonine 69–tryptophan 89, alanine 95–isoleucine 115, leucine 129–proline 149, glycine 156–glycine 176, alanine 196–phenylalanine 216, leucine 235–leucine 255, tryptophan 260–valine 280, and valine 316–histidine 336.

This sequence belongs to the glycosyltransferase 4 family. MraY subfamily. Requires Mg(2+) as cofactor.

Its subcellular location is the cell inner membrane. It catalyses the reaction UDP-N-acetyl-alpha-D-muramoyl-L-alanyl-gamma-D-glutamyl-meso-2,6-diaminopimeloyl-D-alanyl-D-alanine + di-trans,octa-cis-undecaprenyl phosphate = di-trans,octa-cis-undecaprenyl diphospho-N-acetyl-alpha-D-muramoyl-L-alanyl-D-glutamyl-meso-2,6-diaminopimeloyl-D-alanyl-D-alanine + UMP. It functions in the pathway cell wall biogenesis; peptidoglycan biosynthesis. Catalyzes the initial step of the lipid cycle reactions in the biosynthesis of the cell wall peptidoglycan: transfers peptidoglycan precursor phospho-MurNAc-pentapeptide from UDP-MurNAc-pentapeptide onto the lipid carrier undecaprenyl phosphate, yielding undecaprenyl-pyrophosphoryl-MurNAc-pentapeptide, known as lipid I. This is Phospho-N-acetylmuramoyl-pentapeptide-transferase from Synechococcus sp. (strain JA-3-3Ab) (Cyanobacteria bacterium Yellowstone A-Prime).